We begin with the raw amino-acid sequence, 365 residues long: Ferrochelatase (365 aa).

The Fe cation site is built by His-211 and Glu-292.

It belongs to the ferrochelatase family.

It localises to the cytoplasm. The enzyme catalyses heme b + 2 H(+) = protoporphyrin IX + Fe(2+). It functions in the pathway porphyrin-containing compound metabolism; protoheme biosynthesis; protoheme from protoporphyrin-IX: step 1/1. In terms of biological role, catalyzes the ferrous insertion into protoporphyrin IX. The polypeptide is Ferrochelatase (Aromatoleum aromaticum (strain DSM 19018 / LMG 30748 / EbN1) (Azoarcus sp. (strain EbN1))).